The primary structure comprises 599 residues: Putative sensor histidine kinase NtrY-like (599 aa).

The next 4 helical transmembrane spans lie at 17-37, 44-64, 85-105, and 285-305; these read ILILALAISAIVSACTTFYVI, FSTIIGFLLIDLAIFLILGIL, IVIAFSLVAAIPTIIVSVFSV, and IMFIFIALLLLFVAINFGVLF. In terms of domain architecture, HAMP spans 307 to 361; the sequence is AQIVKPIKKLVTATDKVKDGDLTVQVPENEVDKDEIGTLYVAFNRMIKQLSRQQR. The 212-residue stretch at 378-589 folds into the Histidine kinase domain; the sequence is KVAHEIKNPL…IIDIKFDLKE (212 aa). Residue His381 is modified to Phosphohistidine; by autocatalysis.

It localises to the cell membrane. The enzyme catalyses ATP + protein L-histidine = ADP + protein N-phospho-L-histidine.. Its function is as follows. Member of the two-component regulatory system RT0603/RT0550. In Rickettsia typhi (strain ATCC VR-144 / Wilmington), this protein is Putative sensor histidine kinase NtrY-like.